We begin with the raw amino-acid sequence, 226 residues long: Lipoprotein-releasing system ATP-binding protein LolD (226 aa).

Residues 5–226 form the ABC transporter domain; it reads LKATNINKIY…LLRNGHWENY (222 aa). 41-48 contacts ATP; the sequence is GTSGSGKS.

It belongs to the ABC transporter superfamily. Lipoprotein translocase (TC 3.A.1.125) family. The complex is composed of two ATP-binding proteins (LolD) and two transmembrane proteins (LolC and LolE).

The protein resides in the cell inner membrane. Part of the ABC transporter complex LolCDE involved in the translocation of mature outer membrane-directed lipoproteins, from the inner membrane to the periplasmic chaperone, LolA. Responsible for the formation of the LolA-lipoprotein complex in an ATP-dependent manner. This chain is Lipoprotein-releasing system ATP-binding protein LolD, found in Psychrobacter cryohalolentis (strain ATCC BAA-1226 / DSM 17306 / VKM B-2378 / K5).